We begin with the raw amino-acid sequence, 344 residues long: Transcription factor HHO3 (344 aa).

2 disordered regions span residues 90–122 (KWSS…DKKK) and 156–212 (AFQP…KQRR). Over residues 97–106 (DETDKDEEAE) the composition is skewed to acidic residues. Residues 178–188 (TPTSTTTTSST) show a composition bias toward low complexity. Residues 206–266 (SNRKQRRCWS…HLQKYRLHTR (61 aa)) form the HTH myb-type domain. Positions 237 to 262 (PKQIRDLMKVDGLTNDEVKSHLQKYR) form a DNA-binding region, H-T-H motif. The interval 306–344 (PVATQPPQSSTSGERSNRGCKSPATSSTTTHTPHLLPLS) is disordered. The span at 310–319 (QPPQSSTSGE) shows a compositional bias: polar residues. Over residues 330–344 (TSSTTTHTPHLLPLS) the composition is skewed to low complexity.

Its subcellular location is the nucleus. Probable transcription factor involved in phosphate signaling in roots. This is Transcription factor HHO3 from Arabidopsis thaliana (Mouse-ear cress).